A 613-amino-acid chain; its full sequence is tRNA 5-methylaminomethyl-2-thiouridine biosynthesis bifunctional protein MnmC (613 aa).

The tRNA (mnm(5)s(2)U34)-methyltransferase stretch occupies residues 1–225; it reads MKKAKLIFKD…KREMIKAYLE (225 aa). The interval 252 to 613 is FAD-dependent cmnm(5)s(2)U34 oxidoreductase; it reads IGAGISSAVL…FLIRKLKKGL (362 aa).

In the N-terminal section; belongs to the methyltransferase superfamily. tRNA (mnm(5)s(2)U34)-methyltransferase family. This sequence in the C-terminal section; belongs to the DAO family. The cofactor is FAD.

The protein localises to the cytoplasm. The enzyme catalyses 5-aminomethyl-2-thiouridine(34) in tRNA + S-adenosyl-L-methionine = 5-methylaminomethyl-2-thiouridine(34) in tRNA + S-adenosyl-L-homocysteine + H(+). In terms of biological role, catalyzes the last two steps in the biosynthesis of 5-methylaminomethyl-2-thiouridine (mnm(5)s(2)U) at the wobble position (U34) in tRNA. Catalyzes the FAD-dependent demodification of cmnm(5)s(2)U34 to nm(5)s(2)U34, followed by the transfer of a methyl group from S-adenosyl-L-methionine to nm(5)s(2)U34, to form mnm(5)s(2)U34. The protein is tRNA 5-methylaminomethyl-2-thiouridine biosynthesis bifunctional protein MnmC of Campylobacter jejuni subsp. jejuni serotype O:2 (strain ATCC 700819 / NCTC 11168).